The following is a 256-amino-acid chain: Enkurin (256 aa).

Positions T48 to T92 are disordered. Basic and acidic residues predominate over residues D61–L72. Residues P83–P89 carry the SH3-binding motif. The Enkurin domain occupies K160–I252. Positions I176 to R187 constitute an IQ domain.

As to quaternary structure, microtubule inner protein component of sperm flagellar doublet microtubules. Binds calmodulin via its IQ domain. Interacts with TRPC1, TRPC2, TRPC5, but not TRPC3. Interacts with CFAP45.

It localises to the cytoplasm. The protein resides in the cytoskeleton. The protein localises to the cilium axoneme. Its subcellular location is the flagellum axoneme. Adapter that functions to localize a calcium-sensitive signal transduction machinery in sperm to a calcium-permeable ion channel. Microtubule inner protein (MIP) part of the dynein-decorated doublet microtubules (DMTs) in cilia axoneme, which is required for motile cilia beating. The protein is Enkurin (ENKUR) of Sus scrofa (Pig).